Here is a 528-residue protein sequence, read N- to C-terminus: Cytochrome P450 monooxygenase lenC (528 aa).

Residues 5–27 (FVLPHPASMGASCILGLLLLTIL) traverse the membrane as a helical segment. Cysteine 469 lines the heme pocket.

Belongs to the cytochrome P450 family. Heme is required as a cofactor.

The protein localises to the membrane. The protein operates within alkaloid biosynthesis. Functionally, nonribosomal peptide synthetase; part of the gene cluster that mediates the biosynthesis of the ergot alkaloids lentopeptins A and B. Within the pathway, lenC catalyzes the post-NRPS oxidative modification steps using as substrate the N-acyldiketopiperazine intermediate produced by the NRPS lenA. Lentopeptin A forms via a stereospecific hydroxylation, followed by a spontaneous bicyclic lactam core formation, while lentopeptin B is produced through an initial dehydrogenation, followed by a bicyclic lactam core formation and stereospecific hydration. The phenylalanine ammonia-lyase lenB provides the cinnamic acid starter unit to the NRPS lenA for the synthesis of the N-acyldiketopiperazine intermediate which in turn is converted into lentopeptins A and B by lenC. This is Cytochrome P450 monooxygenase lenC from Aspergillus lentulus.